Reading from the N-terminus, the 1360-residue chain is MERVRKNFATADNVLEPPHLISMQRISYEEFLQIDRAPEEREDVGLQAILKNIFPINDFNGLCSLEFLKYKFGEPKYTVQECQQRGMSYEIPLKIVVRLITFDVDEETGVQTIRDMKEQEVFLGSLPLMTADGVFVVNGTERVIVSQLQRSPGLFYSHDNGKSHSSGKLLYSARIIPVRGSWIDLEFDIKDVLHVRIDRRRKFPVTTLLKALGYSSEELLREFYPLENVKLSDGKYWVRFVAEHTAGQRLEFDLVNPQDGEILAKKGRKISKALCRKAVEAGIEFIEASSETILGKVLASAITLAGAEEPLYPCNTEITETVLENLAENGINEFETLFMDGVNYSASFSHTLRLDKVITTAEALLEIYRRLRPSSPPTLEIATTFFENLFFNPDLYDLSEVGRYKINAKLGLKTDIEHRALTRDDIIYGVRYLVRLKDNQGGIDDIDHLGNRRVRTVGELVENQYRMGLVRMERAIKERMTLQDVETLMPHDLINPKPISAAIKEFFGTSQLSQFMDQTNALSEVTHKRRLSALGPGGLSRERAGFEVRDVHPTHYGRICPIETPEGPNIGLIVSLATYARVNPYGFIETPYRKVENRVILDDIRYLSALEEQKQIIAPALVALEADHQSISEGNLIAREEGDVITIGSDNVTYMDVAPNQMISVAASLVPFLENDDANRALMGSNMQRQAVPLLVTAAPLVGTGMERYVARDSGACLLSAGDGVVEEVDSNRVVVRYDKPGVDGYDTGVAVYRLTKYKKSNQNTCFTQTPTILPGLKVEKGTLLADGPGCEAGELALGKNLTVAFMPWRGFNYEDSILINERLLKEDAYTSIHIDVFETMARDTKLGKEEITRDIPNVSEDTLRNLDDSGIVRVGAEIKPGDTLVGKVTPKGETVLSPEEKLLRAIFGEKAQDVKDSSLRVPPGVTGVVIDAKVFSRKGVDKDERSLMIEDLEIERLEGDKRDELRSLKNGVCRELGELIAGNTALGDILDSKGELLISSGDKIEVVHAIAIGFHRLKDIDFSGMADCTDRMDAAYERYQKQAEVIAQRYDGIIERQKKGDDLPPGVVKMVKVYVATKRKLSVGDKMAGRHGNKGVVSRILPEEDMPYFANGDTVDIVLNPLGVPSRMNVGQILEVHLGFAAKNLGAQLEKLAEQYAVEEIKAKLSRVYSDSEYHAIIDGKTDAEVIDWAYRHRKGLHMATPVFDGAEEAEIRKLLIESGVDKGGQSQLYDGLTGEPFANLVTVGVMYMLKLHHLVDNKIHARSTGPYSLVTQQPLGGKAQFGGQRLGEMEVWAMEAYGAAYTLKEFLTVKSDDVEGRTTMYERIVKGNNFLTTGLPESFHVLVKELQGLCLNMELIEE.

Belongs to the RNA polymerase beta chain family. As to quaternary structure, the RNAP catalytic core consists of 2 alpha, 1 beta, 1 beta' and 1 omega subunit. When a sigma factor is associated with the core the holoenzyme is formed, which can initiate transcription.

The catalysed reaction is RNA(n) + a ribonucleoside 5'-triphosphate = RNA(n+1) + diphosphate. In terms of biological role, DNA-dependent RNA polymerase catalyzes the transcription of DNA into RNA using the four ribonucleoside triphosphates as substrates. The polypeptide is DNA-directed RNA polymerase subunit beta (Desulfotalea psychrophila (strain LSv54 / DSM 12343)).